The primary structure comprises 384 residues: uncharacterized protein (384 aa).

To S.pombe SpAC2E11.17.

This is an uncharacterized protein from Schizosaccharomyces pombe (strain 972 / ATCC 24843) (Fission yeast).